A 415-amino-acid polypeptide reads, in one-letter code: SNF1 protein kinase subunit beta-2 (415 aa).

Disordered stretches follow at residues 1 to 43 (MGTT…EMDA), 55 to 158 (KCSD…PSEI), and 249 to 276 (EKNP…SSIA). Gly2 carries N-myristoyl glycine lipidation. A compositionally biased stretch (basic residues) spans 9–19 (AQKKQTTKKCR). The span at 55 to 69 (KCSDSQDAGQPSREG) shows a compositional bias: polar residues. Ser66 is modified (phosphoserine). 2 stretches are compositionally biased toward basic and acidic residues: residues 122–150 (PKQD…RAKE) and 249–264 (EKNP…EADS). The kinase-interacting sequence (KIS); required for interaction with SNF1 stretch occupies residues 154–335 (GPSEIKSSLM…LDRQQSNTDT (182 aa)). The residue at position 298 (Ser298) is a Phosphoserine. The tract at residues 336–415 (SWLTPPQLPP…QILYTPIESS (80 aa)) is association with SNF1 kinase complex (ASC) domain; required for interaction with SNF4.

Belongs to the 5'-AMP-activated protein kinase beta subunit family. Component of the SNF1 kinase complex, a heterotrimeric complex composed of the catalytic alpha subunit SNF1, one of the three related beta subunits SIP1, SIP2 or GAL83, and the regulatory gamma subunit SNF4. The beta subunit serves as a bridge between the catalytic and the regulatory subunit. Interacts (via KIS domain) with SNF1. Interacts (via ASC domain) with SNF4. Phosphorylated by SNF1 in vitro.

It is found in the cytoplasm. The protein localises to the cell membrane. Beta subunit of the SNF1 kinase complex, which is required for transcriptional, metabolic, and developmental adaptations in response to glucose limitation. Has a structural role, mediating heterotrimer formation, and a regulatory role, defining carbon source-regulated subcellular location and substrate specificity of the SNF1 kinase complex. Involved in the regulation of aging. Acts as a negative regulator of nuclear SNF1 activity in young cells by sequestering its activating gamma subunit at the plasma membrane. This is SNF1 protein kinase subunit beta-2 (SIP2) from Saccharomyces cerevisiae (strain ATCC 204508 / S288c) (Baker's yeast).